We begin with the raw amino-acid sequence, 498 residues long: Diacylglycerol O-acyltransferase 1 (498 aa).

Residues 1–66 (MGDRGGAGSS…AHTRDKDGRT (66 aa)) form a disordered region. The Cytoplasmic portion of the chain corresponds to 1 to 92 (MGDRGGAGSS…SLFSSDSGFS (92 aa)). Residues 1–100 (MGDRGGAGSS…FSNYRGILNW (100 aa)) form an involved in homomerization region. S20 bears the Phosphoserine mark. The helical transmembrane segment at 93 to 127 (NYRGILNWCVVMLILSNARLFLENLIKYGILVDPI) threads the bilayer. Residues 128 to 139 (QVVSLFLKDPYS) lie on the Lumenal side of the membrane. The tract at residues 128–139 (QVVSLFLKDPYS) is extracellular loop 1 (EL1). A helical transmembrane segment spans residues 140-165 (WPAPCVIIASNIFVVAAFQIEKRLAV). The MBOAT fold stretch occupies residues 140–498 (WPAPCVIIAS…VLNYDAPVGV (359 aa)). Residues 166–170 (GALTE) are Cytoplasmic-facing. Residues 171-193 (QMGLLLHVVNLATIICFPAAVAL) form a helical membrane-spanning segment. Over 194 to 200 (LVESITP) the chain is Lumenal. The helical transmembrane segment at 201-232 (VGSVFALASYSIMFLKLYSYRDVNLWCRQRRV) threads the bilayer. Over 233–284 (KAKAVSTGKKVSGAAAQQAVSYPDNLTYRDLYYFIFAPTLCYELNFPRSPRI) the chain is Cytoplasmic. Residues 235-287 (KAVSTGKKVSGAAAQQAVSYPDNLTYRDLYYFIFAPTLCYELNFPRSPRIRKR) form an intracellular loop 1 (IL1) region. The chain crosses the membrane as a helical span at residues 285 to 319 (RKRFLLRRVLEMLFFTQLQVGLIQQWMVPTIQNSM). The Lumenal segment spans residues 320–326 (KPFKDMD). The helical transmembrane segment at 327–364 (YSRIIERLLKLAVPNHLIWLIFFYWFFHSCLNAVAELL) threads the bilayer. Topologically, residues 365–410 (QFGDREFYRDWWNAESVTYFWQNWNIPVHKWCIRHFYKPMLRHGSS) are cytoplasmic. Residues 365 to 410 (QFGDREFYRDWWNAESVTYFWQNWNIPVHKWCIRHFYKPMLRHGSS) are intracellular loop 2 (IL2). The short motif at 371–377 (FYRDWWN) is the FYXDWWN motif element. Residues 385–393 (WQNWNIPVH), Y401, and R415 contribute to the an acyl-CoA site. Residues 391–405 (PVHKWCIRHFYKPML) are amphipathic helix (AH). The helical transmembrane segment at 411–431 (KWVARTGVFLTSAFFHEYLVS) threads the bilayer. Residue H426 is part of the active site. Over 432-439 (VPLRMFRL) the chain is Lumenal. A helical transmembrane segment spans residues 440–458 (WAFTAMMAQVPLAWIVGRF). At 459–460 (FQ) the chain is on the cytoplasmic side. A helical transmembrane segment spans residues 461 to 492 (GNYGNAAVWVTLIIGQPVAVLMYVHDYYVLNY). Residue Y488 participates in an acyl-CoA binding. The Lumenal portion of the chain corresponds to 493 to 498 (DAPVGV).

The protein belongs to the membrane-bound acyltransferase family. Sterol o-acyltransferase subfamily. Homodimer or homotetramer; both forms have similar enzymatic activities.

The protein localises to the endoplasmic reticulum membrane. It carries out the reaction an acyl-CoA + a 1,2-diacyl-sn-glycerol = a triacyl-sn-glycerol + CoA. It catalyses the reaction all-trans-retinol + an acyl-CoA = an all-trans-retinyl ester + CoA. The enzyme catalyses 1-octadecanoyl-2-(5Z,8Z,11Z,14Z-eicosatetraenoyl)-sn-glycerol + (9Z)-octadecenoyl-CoA = 1-octadecanoyl-2-(5Z,8Z,11Z,14Z)-eicosatetraenoyl-3-(9Z)-octadecenoyl-sn-glycerol + CoA. The catalysed reaction is hexadecane-1,2-diol + 2 hexadecanoyl-CoA = 1,2-O,O-dihexadecanoyl-1,2-hexadecanediol + 2 CoA. It carries out the reaction hexadecane-1,2-diol + hexadecanoyl-CoA = 2-hydroxyhexadecyl hexadecanoate + CoA. It catalyses the reaction 2-(9Z-octadecenoyl)-glycerol + hexadecanoyl-CoA = 1-hexadecanoyl-2-(9Z-octadecenoyl)-sn-glycerol + CoA. The enzyme catalyses 1,2-di-(9Z-octadecenoyl)-sn-glycerol + hexadecanoyl-CoA = 1,2-di-(9Z)-octadecenoyl-3-hexadecanoyl-sn-glycerol + CoA. The catalysed reaction is hexadecan-1-ol + hexadecanoyl-CoA = hexadecanyl hexadecanoate + CoA. It carries out the reaction all-trans-retinol + hexadecanoyl-CoA = all-trans-retinyl hexadecanoate + CoA. It catalyses the reaction 13-cis-retinol + hexadecanoyl-CoA = 13-cis-retinyl hexadecanoate + CoA. The enzyme catalyses 1,2-di-(9Z-octadecenoyl)-sn-glycerol + (9Z)-octadecenoyl-CoA = 1,2,3-tri-(9Z-octadecenoyl)-glycerol + CoA. The catalysed reaction is 1,3-di-(9Z-octadecenoyl)-glycerol + (9Z)-octadecenoyl-CoA = 1,2,3-tri-(9Z-octadecenoyl)-glycerol + CoA. It carries out the reaction 2,3-di-(9Z)-octadecenoyl-sn-glycerol + (9Z)-octadecenoyl-CoA = 1,2,3-tri-(9Z-octadecenoyl)-glycerol + CoA. It catalyses the reaction 1-O-(9Z-octadecenyl)-glycerol + (9Z)-octadecenoyl-CoA = 1-O-(9Z-octadecyl)-3-(9Z-octadecenoyl)-glycerol + CoA. The enzyme catalyses 1-(9Z-octadecenoyl)-glycerol + (9Z)-octadecenoyl-CoA = 1,2-di-(9Z-octadecenoyl)-glycerol + CoA. The catalysed reaction is 2-(9Z-octadecenoyl)-glycerol + (9Z)-octadecenoyl-CoA = 1,2-di-(9Z-octadecenoyl)-sn-glycerol + CoA. It carries out the reaction 1-O-(9Z-octadecyl)-3-(9Z-octadecenoyl)-glycerol + (9Z)-octadecenoyl-CoA = 1-O-(9Z-octadecenyl)-2,3-di-(9Z-octadecenoyl)glycerol + CoA. It catalyses the reaction 1,2-di-(9Z-octadecenoyl)-glycerol + (9Z)-octadecenoate + H(+) = 1,2,3-tri-(9Z-octadecenoyl)-glycerol + H2O. Its pathway is lipid metabolism; glycerolipid metabolism. Catalyzes the terminal and only committed step in triacylglycerol synthesis by using diacylglycerol and fatty acyl CoA as substrates. Highly expressed in epithelial cells of the small intestine and its activity is essential for the absorption of dietary fats. In liver, plays a role in esterifying exogenous fatty acids to glycerol, and is required to synthesize fat for storage. Also present in female mammary glands, where it produces fat in the milk. May be involved in VLDL (very low density lipoprotein) assembly. In contrast to DGAT2 it is not essential for survival. Functions as the major acyl-CoA retinol acyltransferase (ARAT) in the skin, where it acts to maintain retinoid homeostasis and prevent retinoid toxicity leading to skin and hair disorders. Exhibits additional acyltransferase activities, includin acyl CoA:monoacylglycerol acyltransferase (MGAT), wax monoester and wax diester synthases. Also able to use 1-monoalkylglycerol (1-MAkG) as an acyl acceptor for the synthesis of monoalkyl-monoacylglycerol (MAMAG). This is Diacylglycerol O-acyltransferase 1 from Mus musculus (Mouse).